The chain runs to 1397 residues: ABC transporter B family member 2 (1397 aa).

A disordered region spans residues 1–117; that stretch reads MSDKSNDGGE…KLDEGEKKEG (117 aa). Positions 24-39 are enriched in acidic residues; that stretch reads IDDENNNDINNQDDNE. Residues 37–69 adopt a coiled-coil conformation; it reads DNENNNNNNNNKNSDDNEENLKDYKNKKEDFGN. 2 stretches are compositionally biased toward basic and acidic residues: residues 49-79 and 107-117; these read NSDDNEENLKDYKNKKEDFGNIKMDTIDDRP and KKLDEGEKKEG. Transmembrane regions (helical) follow at residues 137-157, 191-211, 273-293, 369-389, and 407-427; these read ILLMIIGTIGALANGVSMPAI, FIYIGCGVFVCSYVEVAFWML, FICGFIVGFVNGWQLTLVIFA, GIGIGLVFLVLFGTYSLSFWY, and WQGGDVLTVFFSVIMGAMALG. The 299-residue stretch at 140 to 438 folds into the ABC transmembrane type-1 1 domain; that stretch reads MIIGTIGALA…ASPNVASFAN (299 aa). Positions 474–710 constitute an ABC transporter 1 domain; it reads IEYRNIGFSY…NGVYTQLVNR (237 aa). 509-516 is an ATP binding site; the sequence is GDSGGGKS. Disordered stretches follow at residues 710 to 744 and 763 to 783; these read RQQKGGDDGDKKKKKKSKESSKDESNNNIGPSSIS and GLVNDNDNKKKKKKEKKPQEK. The span at 735 to 744 shows a compositional bias: low complexity; the sequence is NNNIGPSSIS. The next 6 membrane-spanning stretches (helical) occupy residues 801-821, 846-866, 922-942, 948-968, 1028-1048, and 1101-1121; these read FLIGLVGATLNGAIMPVFSII, LWFILLAVVAALANFIQIYCF, LGLLIQNIVTIVAGLVIAFVS, LVVLACVPVIGFAGKVEMDFF, GLSFGFSQCTLFFIYTLTYWY, and VFFAIIMSAMGVGQSMAFMPD. Positions 801–1124 constitute an ABC transmembrane type-1 2 domain; sequence FLIGLVGATL…SMAFMPDLGK (324 aa). One can recognise an ABC transporter 2 domain in the interval 1159 to 1395; that stretch reads IEFKDIKFSY…NGFYAELVSR (237 aa). 1194–1201 is a binding site for ATP; the sequence is GNSGGGKS.

This sequence belongs to the ABC transporter superfamily. ABCB family. Multidrug resistance exporter (TC 3.A.1.201) subfamily.

The protein localises to the membrane. The chain is ABC transporter B family member 2 (abcB2) from Dictyostelium discoideum (Social amoeba).